The sequence spans 147 residues: UPF0306 protein YhbP (147 aa).

It belongs to the UPF0306 family.

This Escherichia coli O157:H7 (strain EC4115 / EHEC) protein is UPF0306 protein YhbP.